Here is a 298-residue protein sequence, read N- to C-terminus: Ribosomal protein L11 methyltransferase (298 aa).

The S-adenosyl-L-methionine site is built by Thr139, Gly163, Asp185, and Asn232.

This sequence belongs to the methyltransferase superfamily. PrmA family.

It is found in the cytoplasm. It catalyses the reaction L-lysyl-[protein] + 3 S-adenosyl-L-methionine = N(6),N(6),N(6)-trimethyl-L-lysyl-[protein] + 3 S-adenosyl-L-homocysteine + 3 H(+). Methylates ribosomal protein L11. The protein is Ribosomal protein L11 methyltransferase of Microcystis aeruginosa (strain NIES-843 / IAM M-2473).